The following is a 119-amino-acid chain: Large ribosomal subunit protein bL20c (119 aa).

The protein belongs to the bacterial ribosomal protein bL20 family.

It is found in the plastid. The protein localises to the chloroplast. Its function is as follows. Binds directly to 23S ribosomal RNA and is necessary for the in vitro assembly process of the 50S ribosomal subunit. It is not involved in the protein synthesizing functions of that subunit. The chain is Large ribosomal subunit protein bL20c (rpl20) from Oryza sativa (Rice).